The chain runs to 541 residues: uncharacterized protein (541 aa).

Positions 1–22 are cleaved as a signal peptide; it reads MQFKYGALIFSGFLGLSIVLAS. Cys23 carries N-palmitoyl cysteine lipidation. The S-diacylglycerol cysteine moiety is linked to residue Cys23. Disordered stretches follow at residues 446–468 and 480–514; these read APGQSSQKEGGQQQSNSKDNGNL and KTKTEVKKTEDTQNQGKKAEGTPNQGKKAEGTENQ. The span at 448–460 shows a compositional bias: low complexity; the sequence is GQSSQKEGGQQQS. The segment covering 480–490 has biased composition (basic and acidic residues); it reads KTKTEVKKTED.

The protein belongs to the MG185/MG260 family.

The protein localises to the cell membrane. This is an uncharacterized protein from Mycoplasma pneumoniae (strain ATCC 29342 / M129 / Subtype 1) (Mycoplasmoides pneumoniae).